The sequence spans 951 residues: Coiled-coil domain-containing protein 15 (951 aa).

Coiled coils occupy residues 64–89, 154–193, 782–813, and 839–874; these read LIEEELKEQLRKKQEALKHFQKQVKY, DGIEDEENQNELFQQQAQALSETMKQARHRLASFKTVIKK, MDIEREQVKEQQRQKEQKKKIEKIKKKREQEC, and LAQLQLQEIKGTREKQQREKEYLRYVEALRAQIQEK.

As to quaternary structure, interacts with POC5, POC1B, CETN2 and FAM161A.

It is found in the cytoplasm. Its subcellular location is the cytoskeleton. It localises to the microtubule organizing center. The protein resides in the centrosome. The protein localises to the centriole. It is found in the centriolar satellite. Its function is as follows. Plays an important role in primary cilium assembly, maintenance, and length regulation. Interacts with centriole inner scaffold proteins to promote proper centriole size and integrity and assembly of functional cilia. Required for the recruitment of both the inner scaffold protein POC1B and the distal SFI1/CETN2 complex to centrioles. The protein is Coiled-coil domain-containing protein 15 (CCDC15) of Homo sapiens (Human).